Consider the following 657-residue polypeptide: 2',3'-cyclic-nucleotide 2'-phosphodiesterase/3'-nucleotidase (657 aa).

Residues M1–A26 form the signal peptide. Positions 41, 43, 86, 126, 235, 267, and 269 each coordinate a divalent metal cation. Residues Y450 and Y554 to N559 contribute to the substrate site.

Belongs to the 5'-nucleotidase family. It depends on a divalent metal cation as a cofactor.

It is found in the periplasm. The catalysed reaction is a nucleoside 2',3'-cyclic phosphate + H2O = a nucleoside 3'-phosphate + H(+). The enzyme catalyses a ribonucleoside 3'-phosphate + H2O = a ribonucleoside + phosphate. Its function is as follows. This bifunctional enzyme catalyzes two consecutive reactions during ribonucleic acid degradation. Converts a 2',3'-cyclic nucleotide to a 3'-nucleotide and then the 3'-nucleotide to the corresponding nucleoside and phosphate. This chain is 2',3'-cyclic-nucleotide 2'-phosphodiesterase/3'-nucleotidase (cpdB), found in Haemophilus influenzae (strain ATCC 51907 / DSM 11121 / KW20 / Rd).